The following is a 545-amino-acid chain: CTP synthase (545 aa).

The segment at 1 to 266 (MTTNYIFVTG…DDYICKRFSL (266 aa)) is amidoligase domain. Ser14 is a CTP binding site. Ser14 is a UTP binding site. ATP contacts are provided by residues 15–20 (SLGKGI) and Asp72. Residues Asp72 and Glu140 each contribute to the Mg(2+) site. CTP contacts are provided by residues 147–149 (DIE), 187–192 (KTKPTQ), and Lys223. Residues 187-192 (KTKPTQ) and Lys223 contribute to the UTP site. Residue 239-241 (KDV) participates in ATP binding. Positions 291–542 (TIGMIGKYVE…VKAAGDYQKR (252 aa)) constitute a Glutamine amidotransferase type-1 domain. Gly352 is an L-glutamine binding site. Catalysis depends on Cys379, which acts as the Nucleophile; for glutamine hydrolysis. Residues 380–383 (LGMQ), Glu403, and Arg470 each bind L-glutamine. Catalysis depends on residues His515 and Glu517.

Belongs to the CTP synthase family. Homotetramer.

The enzyme catalyses UTP + L-glutamine + ATP + H2O = CTP + L-glutamate + ADP + phosphate + 2 H(+). It carries out the reaction L-glutamine + H2O = L-glutamate + NH4(+). The catalysed reaction is UTP + NH4(+) + ATP = CTP + ADP + phosphate + 2 H(+). It functions in the pathway pyrimidine metabolism; CTP biosynthesis via de novo pathway; CTP from UDP: step 2/2. With respect to regulation, allosterically activated by GTP, when glutamine is the substrate; GTP has no effect on the reaction when ammonia is the substrate. The allosteric effector GTP functions by stabilizing the protein conformation that binds the tetrahedral intermediate(s) formed during glutamine hydrolysis. Inhibited by the product CTP, via allosteric rather than competitive inhibition. Catalyzes the ATP-dependent amination of UTP to CTP with either L-glutamine or ammonia as the source of nitrogen. Regulates intracellular CTP levels through interactions with the four ribonucleotide triphosphates. This Yersinia pseudotuberculosis serotype O:1b (strain IP 31758) protein is CTP synthase.